The chain runs to 257 residues: MASNNDSIKKTLFVVIALSLVCSIIVSAAAVGLRDKQKENAALDKQSKILQVAGIEAKGSKQIVELFNKSIEPRLVDFNTGDFVEGDAANYDQRKAAKEASESIKLTAEQDKAKIQRRANVGVVYLVKDGDKTSKVILPVHGNGLWSMMYAFVAVETDGNTVSGLTYYEQGETPGLGGEVENPAWRAQWVGKKLFDENHKPAIKIVKGGAPQGSEHGVDGLSGATLTSNGVQNTFDFWLGDMGFGPFLTKVRDGGLN.

Residues 12–32 (LFVVIALSLVCSIIVSAAAVG) traverse the membrane as a helical segment. Residue Thr-225 is modified to FMN phosphoryl threonine.

Belongs to the NqrC family. Composed of six subunits; NqrA, NqrB, NqrC, NqrD, NqrE and NqrF. It depends on FMN as a cofactor.

The protein localises to the cell inner membrane. It catalyses the reaction a ubiquinone + n Na(+)(in) + NADH + H(+) = a ubiquinol + n Na(+)(out) + NAD(+). NQR complex catalyzes the reduction of ubiquinone-1 to ubiquinol by two successive reactions, coupled with the transport of Na(+) ions from the cytoplasm to the periplasm. NqrA to NqrE are probably involved in the second step, the conversion of ubisemiquinone to ubiquinol. In Vibrio cholerae serotype O1 (strain ATCC 39541 / Classical Ogawa 395 / O395), this protein is Na(+)-translocating NADH-quinone reductase subunit C.